A 316-amino-acid polypeptide reads, in one-letter code: NAD kinase 1 (316 aa).

The active-site Proton acceptor is Asp67. 67–68 (DG) serves as a coordination point for NAD(+). Residues 132 to 151 (RSAEERADAPTPLQQPDVED) are disordered. NAD(+) is bound by residues 160-161 (ND), Arg190, and Asp192.

This sequence belongs to the NAD kinase family. It depends on a divalent metal cation as a cofactor.

It is found in the cytoplasm. The enzyme catalyses NAD(+) + ATP = ADP + NADP(+) + H(+). In terms of biological role, involved in the regulation of the intracellular balance of NAD and NADP, and is a key enzyme in the biosynthesis of NADP. Catalyzes specifically the phosphorylation on 2'-hydroxyl of the adenosine moiety of NAD to yield NADP. In Parasynechococcus marenigrum (strain WH8102), this protein is NAD kinase 1.